The following is a 151-amino-acid chain: MHALQAKILDPRIGNEFPLPQYATPGSAGLDLRAMLKEDTLLEPGQTLLIPTGLSVYIGDPGLAALILPRSGLGHKHGIVLGNLVGLIDSDYQGELMVSCWNRGQTAFNIAVGERIAQLVLVPVVQAHFEVVEAFDESQRGAGGFGHSGSH.

Substrate is bound by residues 70-72 (RSG), N83, 87-89 (LID), and M97.

It belongs to the dUTPase family. It depends on Mg(2+) as a cofactor.

The enzyme catalyses dUTP + H2O = dUMP + diphosphate + H(+). Its pathway is pyrimidine metabolism; dUMP biosynthesis; dUMP from dCTP (dUTP route): step 2/2. This enzyme is involved in nucleotide metabolism: it produces dUMP, the immediate precursor of thymidine nucleotides and it decreases the intracellular concentration of dUTP so that uracil cannot be incorporated into DNA. This chain is Deoxyuridine 5'-triphosphate nucleotidohydrolase, found in Pseudomonas fluorescens (strain ATCC BAA-477 / NRRL B-23932 / Pf-5).